The sequence spans 306 residues: Palmitoyl-protein thioesterase 1 (306 aa).

A signal peptide spans 1–27 (MASSSCLWLLALAFLLGSCASLALGHL). 3 disulfides stabilise this stretch: C45–C46, C96–C128, and C152–C160. The active site involves S115. 3 N-linked (GlcNAc...) asparagine glycosylation sites follow: N197, N212, and N232. Residues D233 and H289 contribute to the active site.

This sequence belongs to the palmitoyl-protein thioesterase family. Interacts with CLN5, ATP5F1A and ATP5F1B. Post-translationally, glycosylated. In terms of tissue distribution, spleen, brain, seminal vesicle, and testis. Lower levels of activity in liver, heart, lung, and skeletal muscle.

The protein resides in the lysosome. Its subcellular location is the secreted. It is found in the golgi apparatus. It localises to the endoplasmic reticulum. It catalyses the reaction S-hexadecanoyl-L-cysteinyl-[protein] + H2O = L-cysteinyl-[protein] + hexadecanoate + H(+). It carries out the reaction hexadecanoyl-CoA + H2O = hexadecanoate + CoA + H(+). The catalysed reaction is S-hexadecanoyl-N-acetylcysteamine + H2O = N-acetylcysteamine + hexadecanoate + H(+). The enzyme catalyses S-hexadecanoyl-N-acetylcysteine methyl ester + H2O = N-acetylcysteine methyl ester + hexadecanoate + H(+). With respect to regulation, palmitoylation reduces PPT1 enzymatic activity. In terms of biological role, has thioesterase activity against fatty acid thioesters with 14 -18 carbons, including palmitoyl-CoA, S-palmitoyl-N-acetylcysteamine, and palmitoylated proteins. In contrast to PPT2, PPT1 can hydrolyze palmitoylated proteins and palmitoylcysteine. This Bos taurus (Bovine) protein is Palmitoyl-protein thioesterase 1 (PPT1).